We begin with the raw amino-acid sequence, 258 residues long: Trans-aconitate 2-methyltransferase (258 aa).

Belongs to the methyltransferase superfamily. Tam family.

It localises to the cytoplasm. It carries out the reaction trans-aconitate + S-adenosyl-L-methionine = (E)-3-(methoxycarbonyl)pent-2-enedioate + S-adenosyl-L-homocysteine. In terms of biological role, catalyzes the S-adenosylmethionine monomethyl esterification of trans-aconitate. The chain is Trans-aconitate 2-methyltransferase from Acidovorax sp. (strain JS42).